The following is a 360-amino-acid chain: MECKYFGKCGSCSLYEGGYEEQLQKKVHEFEKLFGLEPEIFPSKQSRYRARAEFRYIDGEYAMHRLHEKGLVTIDACEMVLESIYELMSKLRLLINKHEILSNRLYRVDFLSGLSGESLVTMVYHRPIDEAWEKAANEIAKALHIDIVGRSRGKKIVIGKEYITEKLPVFEKEFLFRHYEGSFTQPNPYVNIKMIEWAGRIAKDLQGDLLELYCGAGNFTLPLSRYFEKVLATEVNKSSIKAAKENVALNGIENVEFVRLSSQEVTQALRGVRDFRRLENIDLHSYNFQTVFVDPPRCGLDDDTRELVREFDNIVYISCNPQTLHRDLEELSKTHTVQKVAVFDQFPYTPHLESGVYLTR.

Gln-185, Tyr-213, Asn-218, Glu-234, and Asp-294 together coordinate S-adenosyl-L-methionine. The active-site Nucleophile is Cys-319. Glu-353 functions as the Proton acceptor in the catalytic mechanism.

The protein belongs to the class I-like SAM-binding methyltransferase superfamily. RNA M5U methyltransferase family. TrmA subfamily.

The catalysed reaction is uridine(54) in tRNA + S-adenosyl-L-methionine = 5-methyluridine(54) in tRNA + S-adenosyl-L-homocysteine + H(+). The enzyme catalyses uridine(341) in tmRNA + S-adenosyl-L-methionine = 5-methyluridine(341) in tmRNA + S-adenosyl-L-homocysteine + H(+). Dual-specificity methyltransferase that catalyzes the formation of 5-methyluridine at position 54 (m5U54) in all tRNAs, and that of position 341 (m5U341) in tmRNA (transfer-mRNA). This Nitratiruptor sp. (strain SB155-2) protein is tRNA/tmRNA (uracil-C(5))-methyltransferase.